A 455-amino-acid polypeptide reads, in one-letter code: Bifunctional protein GlmU (455 aa).

A pyrophosphorylase region spans residues 1 to 229 (MLNSAMSVVI…ISETEGVNNR (229 aa)). Residues 11-14 (LAAG), Lys25, Gln76, 81-82 (GT), 103-105 (YGD), Gly140, Glu154, Asn169, and Asn227 contribute to the UDP-N-acetyl-alpha-D-glucosamine site. Asp105 contacts Mg(2+). Position 227 (Asn227) interacts with Mg(2+). The tract at residues 230 to 250 (LQLSRLERIYQAEQAEKLLLA) is linker. The tract at residues 251-455 (GVMLRDPARF…KQGWQRPVKK (205 aa)) is N-acetyltransferase. UDP-N-acetyl-alpha-D-glucosamine-binding residues include Arg333 and Lys351. His363 acts as the Proton acceptor in catalysis. 2 residues coordinate UDP-N-acetyl-alpha-D-glucosamine: Tyr366 and Asn377. Acetyl-CoA contacts are provided by residues Ala380, 386 to 387 (NY), Ser405, Ala423, and Arg440.

In the N-terminal section; belongs to the N-acetylglucosamine-1-phosphate uridyltransferase family. The protein in the C-terminal section; belongs to the transferase hexapeptide repeat family. As to quaternary structure, homotrimer. It depends on Mg(2+) as a cofactor.

Its subcellular location is the cytoplasm. The catalysed reaction is alpha-D-glucosamine 1-phosphate + acetyl-CoA = N-acetyl-alpha-D-glucosamine 1-phosphate + CoA + H(+). It catalyses the reaction N-acetyl-alpha-D-glucosamine 1-phosphate + UTP + H(+) = UDP-N-acetyl-alpha-D-glucosamine + diphosphate. Its pathway is nucleotide-sugar biosynthesis; UDP-N-acetyl-alpha-D-glucosamine biosynthesis; N-acetyl-alpha-D-glucosamine 1-phosphate from alpha-D-glucosamine 6-phosphate (route II): step 2/2. It participates in nucleotide-sugar biosynthesis; UDP-N-acetyl-alpha-D-glucosamine biosynthesis; UDP-N-acetyl-alpha-D-glucosamine from N-acetyl-alpha-D-glucosamine 1-phosphate: step 1/1. The protein operates within bacterial outer membrane biogenesis; LPS lipid A biosynthesis. In terms of biological role, catalyzes the last two sequential reactions in the de novo biosynthetic pathway for UDP-N-acetylglucosamine (UDP-GlcNAc). The C-terminal domain catalyzes the transfer of acetyl group from acetyl coenzyme A to glucosamine-1-phosphate (GlcN-1-P) to produce N-acetylglucosamine-1-phosphate (GlcNAc-1-P), which is converted into UDP-GlcNAc by the transfer of uridine 5-monophosphate (from uridine 5-triphosphate), a reaction catalyzed by the N-terminal domain. This Salmonella arizonae (strain ATCC BAA-731 / CDC346-86 / RSK2980) protein is Bifunctional protein GlmU.